Reading from the N-terminus, the 172-residue chain is Myosin regulatory light polypeptide 9 (172 aa).

Basic residues predominate over residues 1–16; it reads MSSKRAKAKTTKKRPQ. Positions 1-20 are disordered; the sequence is MSSKRAKAKTTKKRPQRATS. At S2 the chain carries N-acetylserine. T19 carries the phosphothreonine; by MLCK, CIT and ROCK2 modification. Position 20 is a phosphoserine; by CDC42BP, CIT, MLCK, PAK1, ROCK1, ROCK2, DAPK1, DAPK2 and ZIPK/DAPK3 (S20). EF-hand domains lie at 29–64, 98–133, and 134–169; these read SQIQ…LGKN, DPED…MGDR, and FTDE…GAKD. Ca(2+) is bound by residues D42, N44, D46, and D53.

In terms of assembly, myosin is a hexamer of 2 heavy chains and 4 light chains: interacts with myosin heavy chain MYO19. Interacts with LUZP1; the interaction results in inhibition of phosphorylation of MYL9 by DAPK3. Post-translationally, phosphorylation increases the actin-activated myosin ATPase activity and thereby regulates the contractile activity. It is required to generate the driving force in the migration of the cells but not necessary for localization of myosin-2 at the leading edge. Phosphorylation is required for myotube formation. Phosphorylated by DAPK3; DAPK3-mediated phosphorylation is inhibited by LUZP1.

It is found in the cytoplasm. Its subcellular location is the cytoskeleton. The protein localises to the cell cortex. Its function is as follows. Myosin regulatory subunit that plays an important role in regulation of both smooth muscle and nonmuscle cell contractile activity via its phosphorylation. Implicated in cytokinesis, receptor capping, and cell locomotion. In myoblasts, regulates PIEZO1-dependent cortical actomyosin assembly involved in myotube formation. The chain is Myosin regulatory light polypeptide 9 (Myl9) from Mus musculus (Mouse).